A 1302-amino-acid polypeptide reads, in one-letter code: Multidrug resistance protein 1 (1302 aa).

A helical membrane pass occupies residues 43-63; it reads GVFEIILLIIGIIGSIGVGCL. The 310-residue stretch at 51 to 360 folds into the ABC transmembrane type-1 1 domain; sequence IIGIIGSIGV…ISTPINILNS (310 aa). Asn-83 carries an N-linked (GlcNAc...) asparagine glycan. Transmembrane regions (helical) follow at residues 118-138, 192-212, 213-233, 292-312, and 331-351; these read LYFA…FFVL, LFQT…KCWD, LTLV…GLGM, IGIG…NALG, and AGTV…LSQI. The region spanning 395 to 634 is the ABC transporter 1 domain; it reads IRFEDVQFVY…KGTYYGLVKR (240 aa). 430–437 contacts ATP; the sequence is GASGCGKS. Residue Asn-663 is glycosylated (N-linked (GlcNAc...) asparagine). The helical transmembrane segment at 712–732 threads the bilayer; it reads YIFCTLGLIGGIGAGAAFPFY. The ABC transmembrane type-1 2 domain maps to 713–1022; sequence IFCTLGLIGG…IGNVLPDVGK (310 aa). A glycan (N-linked (GlcNAc...) asparagine) is linked at Asn-751. A helical membrane pass occupies residues 765–785; sequence MIIICIGIITMISFFCYVGLF. Residue Asn-808 is glycosylated (N-linked (GlcNAc...) asparagine). Transmembrane regions (helical) follow at residues 841-861 and 862-882; these read VGDI…GLYF and SWKL…FMFI. Positions 1057 to 1296 constitute an ABC transporter 2 domain; sequence IEFKNIHFRY…KGFYYTLAMQ (240 aa). 1092-1099 contacts ATP; sequence GASGCGKS.

It belongs to the ABC transporter superfamily. ABCB family. Multidrug resistance exporter (TC 3.A.1.201) subfamily.

The protein resides in the membrane. It carries out the reaction ATP + H2O + xenobioticSide 1 = ADP + phosphate + xenobioticSide 2.. In terms of biological role, energy-dependent efflux pump responsible for decreased drug accumulation in multidrug resistance parasites. In Entamoeba histolytica (strain ATCC 30459 / HM-1:IMSS / ABRM), this protein is Multidrug resistance protein 1.